A 173-amino-acid polypeptide reads, in one-letter code: MLNRRNGYEYEDLLACARGEMFGPGNAQLPLPPMLMFDRITDINDNGGEFGKGLVRAELDVKPDLWFFGCHFKNDPVMPGCLGLDALWQMVGFYLGWSGGEGRGRALGLNELKFSGQVLPEARKVVYNVDIKRVMRAKLVLGIADGWLSVDDQIIYRAKDLKVGLFKQGTSLG.

H71 is an active-site residue.

Belongs to the thioester dehydratase family. FabA subfamily. As to quaternary structure, homodimer.

The protein resides in the cytoplasm. It carries out the reaction a (3R)-hydroxyacyl-[ACP] = a (2E)-enoyl-[ACP] + H2O. The enzyme catalyses (3R)-hydroxydecanoyl-[ACP] = (2E)-decenoyl-[ACP] + H2O. It catalyses the reaction (2E)-decenoyl-[ACP] = (3Z)-decenoyl-[ACP]. It functions in the pathway lipid metabolism; fatty acid biosynthesis. In terms of biological role, necessary for the introduction of cis unsaturation into fatty acids. Catalyzes the dehydration of (3R)-3-hydroxydecanoyl-ACP to E-(2)-decenoyl-ACP and then its isomerization to Z-(3)-decenoyl-ACP. Can catalyze the dehydratase reaction for beta-hydroxyacyl-ACPs with saturated chain lengths up to 16:0, being most active on intermediate chain length. The chain is 3-hydroxydecanoyl-[acyl-carrier-protein] dehydratase from Bradyrhizobium diazoefficiens (strain JCM 10833 / BCRC 13528 / IAM 13628 / NBRC 14792 / USDA 110).